Here is a 105-residue protein sequence, read N- to C-terminus: Phosphoribosyl-ATP pyrophosphatase (105 aa).

Belongs to the PRA-PH family.

Its subcellular location is the cytoplasm. It catalyses the reaction 1-(5-phospho-beta-D-ribosyl)-ATP + H2O = 1-(5-phospho-beta-D-ribosyl)-5'-AMP + diphosphate + H(+). It participates in amino-acid biosynthesis; L-histidine biosynthesis; L-histidine from 5-phospho-alpha-D-ribose 1-diphosphate: step 2/9. The polypeptide is Phosphoribosyl-ATP pyrophosphatase (Vesicomyosocius okutanii subsp. Calyptogena okutanii (strain HA)).